Reading from the N-terminus, the 423-residue chain is MIDLKQLRDDPDRVRESQRTRGEDPGLVDQLLQADQARREAISAADATRAEHKAYTKSMGKKMRDASPEEKENLRAKGTELSNVVKEKEEAQRVAEASVHDLQMQISNIVEGAPAGGEEDFVVVEKVGTPPQFDFEPKDHLELGESLGIIDMERGAKVSGSRFYFLKGAGALLQLGMLQLAAQKAVQHGFELMITPVIVNPESMSGTGFLGQHADEIYYLQEDNQYLVGTSEVALAGYHSKEIIDLSAGPKRYAGWSSCFRREAGSYGKDTRGILRVHQFDKVEMFSYCKPEDAAAEHQKLLSMEREMLAAVEVPYRIIDVAGGDLGSSAARKFDTEAWVPTQNTYRELTSTSNCTTFQARRLGIRYRDENNKTQIAATLNGTLATTRWLVAILENNQQADGSVKVPEALQPYVGQDVLKPVK.

Basic and acidic residues-rich tracts occupy residues 1-24 (MIDL…RGED) and 62-71 (KMRDASPEEK). Positions 1–71 (MIDLKQLRDD…KMRDASPEEK (71 aa)) are disordered. 230–232 (TSE) is an L-serine binding site. ATP contacts are provided by residues 261 to 263 (RRE) and V277. E284 is an L-serine binding site. Residue 348 to 351 (ELTS) participates in ATP binding. Position 383 (T383) interacts with L-serine.

The protein belongs to the class-II aminoacyl-tRNA synthetase family. Type-1 seryl-tRNA synthetase subfamily. As to quaternary structure, homodimer. The tRNA molecule binds across the dimer.

Its subcellular location is the cytoplasm. The enzyme catalyses tRNA(Ser) + L-serine + ATP = L-seryl-tRNA(Ser) + AMP + diphosphate + H(+). The catalysed reaction is tRNA(Sec) + L-serine + ATP = L-seryl-tRNA(Sec) + AMP + diphosphate + H(+). It participates in aminoacyl-tRNA biosynthesis; selenocysteinyl-tRNA(Sec) biosynthesis; L-seryl-tRNA(Sec) from L-serine and tRNA(Sec): step 1/1. Catalyzes the attachment of serine to tRNA(Ser). Is also able to aminoacylate tRNA(Sec) with serine, to form the misacylated tRNA L-seryl-tRNA(Sec), which will be further converted into selenocysteinyl-tRNA(Sec). The chain is Serine--tRNA ligase from Corynebacterium kroppenstedtii (strain DSM 44385 / JCM 11950 / CIP 105744 / CCUG 35717).